The chain runs to 231 residues: DNA mismatch repair protein MutH (231 aa).

This sequence belongs to the MutH family.

The protein resides in the cytoplasm. Its function is as follows. Sequence-specific endonuclease that cleaves unmethylated GATC sequences. It is involved in DNA mismatch repair. The chain is DNA mismatch repair protein MutH from Shewanella woodyi (strain ATCC 51908 / MS32).